The primary structure comprises 37 residues: Large ribosomal subunit protein bL36 (37 aa).

The protein belongs to the bacterial ribosomal protein bL36 family.

The polypeptide is Large ribosomal subunit protein bL36 (Geobacter sp. (strain M21)).